We begin with the raw amino-acid sequence, 748 residues long: Polyribonucleotide nucleotidyltransferase (748 aa).

Mg(2+) is bound by residues Asp487 and Asp493. The KH domain occupies Pro554–Ile613. In terms of domain architecture, S1 motif spans Gly623–Lys691. The interval Lys691–Asn748 is disordered. Low complexity predominate over residues Ser699–Lys712. The segment covering Asp713 to Asp722 has biased composition (basic and acidic residues).

The protein belongs to the polyribonucleotide nucleotidyltransferase family. It depends on Mg(2+) as a cofactor.

The protein localises to the cytoplasm. It catalyses the reaction RNA(n+1) + phosphate = RNA(n) + a ribonucleoside 5'-diphosphate. Functionally, involved in mRNA degradation. Catalyzes the phosphorolysis of single-stranded polyribonucleotides processively in the 3'- to 5'-direction. In Rickettsia africae (strain ESF-5), this protein is Polyribonucleotide nucleotidyltransferase.